Consider the following 310-residue polypeptide: UDP-N-acetylenolpyruvoylglucosamine reductase (310 aa).

The region spanning 35–199 (VGGPAQALFT…TSARFRGTPA (165 aa)) is the FAD-binding PCMH-type domain. Residue arginine 179 is part of the active site. Serine 228 functions as the Proton donor in the catalytic mechanism. The active site involves glutamate 298.

Belongs to the MurB family. Requires FAD as cofactor.

Its subcellular location is the cytoplasm. The enzyme catalyses UDP-N-acetyl-alpha-D-muramate + NADP(+) = UDP-N-acetyl-3-O-(1-carboxyvinyl)-alpha-D-glucosamine + NADPH + H(+). It functions in the pathway cell wall biogenesis; peptidoglycan biosynthesis. Functionally, cell wall formation. This chain is UDP-N-acetylenolpyruvoylglucosamine reductase, found in Rhodopseudomonas palustris (strain BisB5).